Consider the following 325-residue polypeptide: MPSSTAMAVGALSSSLLVTCCLMVALCSPSIPLEKLAQAPEQPGQEKREHASRDGPGRVNELGRPARDEGGSGRDWKSKSGRGLAGREPWSKLKQAWVSQGGGAKAGDLQVRPRGDTPQAEALAAAAQDAIGPELAPTPEPPEEYVYPDYRGKGCVDESGFVYAIGEKFAPGPSACPCLCTEEGPLCAQPECPRLHPRCIHVDTSQCCPQCKERKNYCEFRGKTYQTLEEFVVSPCERCRCEANGEVLCTVSACPQTECVDPVYEPDQCCPICKNGPNCFAETAVIPAGREVKTDECTICHCTYEEGTWRIERQAMCTRHECRQM.

The N-terminal stretch at 1 to 27 (MPSSTAMAVGALSSSLLVTCCLMVALC) is a signal peptide. Residues 37 to 121 (AQAPEQPGQE…RPRGDTPQAE (85 aa)) form a disordered region. 2 stretches are compositionally biased toward basic and acidic residues: residues 44 to 56 (GQEK…RDGP) and 64 to 78 (RPAR…DWKS). The Mediates cell adhesion motif lies at 114–116 (RGD). VWFC domains lie at 153-212 (KGCV…PQCK) and 216-274 (NYCE…PICK).

In terms of assembly, peripherally associated with AMPAR complex. AMPAR complex consists of an inner core made of 4 pore-forming GluA/GRIA proteins (GRIA1, GRIA2, GRIA3 and GRIA4) and 4 major auxiliary subunits arranged in a twofold symmetry. One of the two pairs of distinct binding sites is occupied either by CNIH2, CNIH3 or CACNG2, CACNG3. The other harbors CACNG2, CACNG3, CACNG4, CACNG8 or GSG1L. This inner core of AMPAR complex is complemented by outer core constituents binding directly to the GluA/GRIA proteins at sites distinct from the interaction sites of the inner core constituents. Outer core constituents include at least PRRT1, PRRT2, CKAMP44/SHISA9, FRRS1L and NRN1. The proteins of the inner and outer core serve as a platform for other, more peripherally associated AMPAR constituents, including VWC2. Alone or in combination, these auxiliary subunits control the gating and pharmacology of the AMPAR complex and profoundly impact their biogenesis and protein processing.

The protein localises to the secreted. The protein resides in the extracellular space. Its subcellular location is the extracellular matrix. It localises to the basement membrane. It is found in the synapse. BMP antagonist which may play a role in neural development. Promotes cell adhesion. This Homo sapiens (Human) protein is Brorin (VWC2).